Reading from the N-terminus, the 425-residue chain is Septin-11 (425 aa).

Ala2 carries the N-acetylalanine modification. Ser9 carries the post-translational modification Phosphoserine. One can recognise a Septin-type G domain in the interval Gln38 to Glu304. The G1 motif stretch occupies residues Gly48 to Ser55. GTP-binding positions include Gly48 to Ser55, Gly103, Lys184 to Glu192, Gly238, and Arg253. Residues Asp100–Gly103 are G3 motif. Residues Ala183–Asp186 form a G4 motif region. The stretch at Gln320–Gln410 forms a coiled coil. Residues Lys399–Asn425 are disordered. The segment covering Ala401–Gln416 has biased composition (low complexity).

The protein belongs to the TRAFAC class TrmE-Era-EngA-EngB-Septin-like GTPase superfamily. Septin GTPase family. In terms of assembly, septins polymerize into heterooligomeric protein complexes that form filaments, and can associate with cellular membranes, actin filaments and microtubules. Forms homooligomers. GTPase activity is required for filament formation. Interacts with SEPTIN7, SEPTIN9 and SEPTIN12.

Its subcellular location is the cytoplasm. The protein resides in the cytoskeleton. It is found in the synapse. It localises to the cell projection. The protein localises to the dendritic spine. Its subcellular location is the axon. In terms of biological role, filament-forming cytoskeletal GTPase. May play a role in cytokinesis (Potential). May play a role in the cytoarchitecture of neurons, including dendritic arborization and dendritic spines, and in GABAergic synaptic connectivity. This is Septin-11 from Bos taurus (Bovine).